Here is a 203-residue protein sequence, read N- to C-terminus: Recombination protein RecR (203 aa).

Residues 56-71 (CSVCGNVSDEERCRIC) form a C4-type zinc finger. A Toprim domain is found at 79-179 (SLVCVVEEPK…TVTRIASGLP (101 aa)).

The protein belongs to the RecR family.

Its function is as follows. May play a role in DNA repair. It seems to be involved in an RecBC-independent recombinational process of DNA repair. It may act with RecF and RecO. This chain is Recombination protein RecR, found in Mycolicibacterium smegmatis (strain ATCC 700084 / mc(2)155) (Mycobacterium smegmatis).